We begin with the raw amino-acid sequence, 410 residues long: Arginine deiminase (410 aa).

The active-site Amidino-cysteine intermediate is the Cys-400.

This sequence belongs to the arginine deiminase family.

The protein resides in the cytoplasm. It carries out the reaction L-arginine + H2O = L-citrulline + NH4(+). The protein operates within amino-acid degradation; L-arginine degradation via ADI pathway; carbamoyl phosphate from L-arginine: step 1/2. The sequence is that of Arginine deiminase from Levilactobacillus brevis (strain ATCC 367 / BCRC 12310 / CIP 105137 / JCM 1170 / LMG 11437 / NCIMB 947 / NCTC 947) (Lactobacillus brevis).